The sequence spans 198 residues: V-type proton ATPase subunit E (198 aa).

It belongs to the V-ATPase E subunit family.

Its function is as follows. Produces ATP from ADP in the presence of a proton gradient across the membrane. This is V-type proton ATPase subunit E from Borrelia turicatae (strain 91E135).